Consider the following 355-residue polypeptide: Fe-S cluster assembly protein DRE2 (355 aa).

Positions 23–156 are N-terminal SAM-like domain; it reads TSFNPRTLLL…KPDYSASVAV (134 aa). The interval 157-247 is linker; that stretch reads PLRLRRKDNS…EDTLLTEEDM (91 aa). The interval 189 to 214 is disordered; that stretch reads RKSVDMTDDVPEKDVPKVDSPKNDAP. Residues 190 to 213 show a composition bias toward basic and acidic residues; sequence KSVDMTDDVPEKDVPKVDSPKNDA. [2Fe-2S] cluster is bound by residues Cys257, Cys268, Cys271, and Cys273. The fe-S binding site A stretch occupies residues 257-273; the sequence is CAPRAGKRRRACKDCTC. [4Fe-4S] cluster is bound by residues Cys318, Cys321, Cys329, and Cys332. 2 short sequence motifs (cx2C motif) span residues 318–321 and 329–332; these read CGNC and CDGC. Residues 318–332 form a fe-S binding site B region; that stretch reads CGNCSLGDAFRCDGC.

The protein belongs to the anamorsin family. Monomer. Interacts with TAH18. Interacts with MIA40. Requires [2Fe-2S] cluster as cofactor. [4Fe-4S] cluster serves as cofactor.

The protein resides in the cytoplasm. It is found in the mitochondrion intermembrane space. Its function is as follows. Component of the cytosolic iron-sulfur (Fe-S) protein assembly (CIA) machinery required for the maturation of extramitochondrial Fe-S proteins. Part of an electron transfer chain functioning in an early step of cytosolic Fe-S biogenesis, facilitating the de novo assembly of a [4Fe-4S] cluster on the scaffold complex CFD1-NBP35. Electrons are transferred to DRE2 from NADPH via the FAD- and FMN-containing protein TAH18. TAH18-DRE2 are also required for the assembly of the diferric tyrosyl radical cofactor of ribonucleotide reductase (RNR), probably by providing electrons for reduction during radical cofactor maturation in the catalytic small subunit RNR2. The protein is Fe-S cluster assembly protein DRE2 of Botryotinia fuckeliana (strain B05.10) (Noble rot fungus).